The primary structure comprises 112 residues: Integration host factor subunit alpha (112 aa).

It belongs to the bacterial histone-like protein family. As to quaternary structure, heterodimer of an alpha and a beta chain.

Functionally, this protein is one of the two subunits of integration host factor, a specific DNA-binding protein that functions in genetic recombination as well as in transcriptional and translational control. The chain is Integration host factor subunit alpha from Rhizobium etli (strain ATCC 51251 / DSM 11541 / JCM 21823 / NBRC 15573 / CFN 42).